The sequence spans 1828 residues: AT-rich interactive domain-containing protein 2 (1828 aa).

Ala2 is modified (N-acetylalanine). Phosphoserine is present on Ser4. Residues Lys7, Lys15, and Lys119 each participate in a glycyl lysine isopeptide (Lys-Gly) (interchain with G-Cter in SUMO2) cross-link. An ARID domain is found at 13-105 (RRKGLAFLDE…YLEKYEKVHH (93 aa)). The short motif at 313–317 (LRFLL) is the LXXLL element. The RFX-type winged-helix DNA-binding region spans 524–603 (ACQWLNAHFE…IHVIGVKRRA (80 aa)). Lys555 participates in a covalent cross-link: Glycyl lysine isopeptide (Lys-Gly) (interchain with G-Cter in SUMO2). Ser631 and Ser635 each carry phosphoserine. The residue at position 653 (Thr653) is a Phosphothreonine. A Phosphoserine modification is found at Ser689. A Phosphothreonine modification is found at Thr692. Disordered regions lie at residues 824–843 (TSPQ…SQPQ), 962–1028 (LTGQ…QVQV), 1245–1339 (KEAT…EPVD), 1360–1462 (KGDG…RPSV), 1483–1503 (HSGP…TNGT), and 1566–1618 (SAAQ…HADP). The span at 987–1011 (AMSSSSTLQSQGPPPTVSQMLSVKR) shows a compositional bias: polar residues. Low complexity predominate over residues 1012–1028 (QQQQQHSPAAPAQQVQV). Basic and acidic residues predominate over residues 1245-1259 (KEATGLHVHERKIEV). Positions 1267 to 1283 (RGTTNTSNGDTSESELQ) are enriched in polar residues. Residue Ser1294 is modified to Phosphoserine. 2 stretches are compositionally biased toward polar residues: residues 1295–1320 (DSSL…SNGP) and 1366–1379 (LSKN…SNHV). Ser1385 carries the phosphoserine modification. Polar residues-rich tracts occupy residues 1390 to 1400 (QGTSGATQQDT) and 1419 to 1428 (GSPSTSSMQE). A compositionally biased stretch (low complexity) spans 1453–1462 (SDVPQQRPSV). Ser1491 carries the phosphoserine modification. Composition is skewed to polar residues over residues 1491–1503 (SALS…TNGT) and 1567–1586 (AAQQ…APQN). Residues 1594–1614 (AVQVQGQPSSSQPSPVSASSQ) are compositionally biased toward low complexity. The C2H2-type zinc-finger motif lies at 1626 to 1651 (FMCLWQSCKKWFQTPSQVFYHAATEH). Residues Lys1695, Lys1710, and Lys1725 each participate in a glycyl lysine isopeptide (Lys-Gly) (interchain with G-Cter in SUMO2) cross-link. The interval 1697 to 1726 (DEPGQVANQKSSTKQPTVGGTGSAPRAQKA) is disordered. Residues 1702–1714 (VANQKSSTKQPTV) show a composition bias toward polar residues.

Belongs to the RFX family. As to quaternary structure, component of the SWI/SNF-B (PBAF) chromatin remodeling complex, at least composed of SMARCA4/BRG1, SMARCB1/BAF47/SNF5, ACTL6A/BAF53A or ACTL6B/BAF53B, SMARCE1/BAF57, SMARCD1/BAF60A, SMARCD2/BAF60B, perhaps SMARCD3/BAF60C, SMARCC1/BAF155, SMARCC2/BAF170, PBRM1/BAF180, ARID2/BAF200 and actin. Interacts with SRF. Forms complexes with SRF and SRF cofactors MYOCD, NKX2-5 and SRFBP1. As to expression, highly expressed in testis, expressed in heart, liver and kidney.

It localises to the nucleus. In terms of biological role, involved in transcriptional activation and repression of select genes by chromatin remodeling (alteration of DNA-nucleosome topology). Required for the stability of the SWI/SNF chromatin remodeling complex SWI/SNF-B (PBAF). May be involved in targeting the complex to different genes. May be involved in regulating transcriptional activation of cardiac genes. The sequence is that of AT-rich interactive domain-containing protein 2 from Mus musculus (Mouse).